The following is a 649-amino-acid chain: Threonine--tRNA ligase (649 aa).

The 60-residue stretch at 1–60 (MHVTLPDGKQLDLQAGATALDVARALGPRLAQDALAALVNGELMDLMTPLPEGAQVRLIT) folds into the TGS domain. Residues 248-544 (DHRKLGRELE…LIEHYGGDFP (297 aa)) are catalytic. The Zn(2+) site is built by C341, H392, and H521.

This sequence belongs to the class-II aminoacyl-tRNA synthetase family. In terms of assembly, homodimer. It depends on Zn(2+) as a cofactor.

The protein localises to the cytoplasm. The catalysed reaction is tRNA(Thr) + L-threonine + ATP = L-threonyl-tRNA(Thr) + AMP + diphosphate + H(+). Functionally, catalyzes the attachment of threonine to tRNA(Thr) in a two-step reaction: L-threonine is first activated by ATP to form Thr-AMP and then transferred to the acceptor end of tRNA(Thr). Also edits incorrectly charged L-seryl-tRNA(Thr). In Deinococcus geothermalis (strain DSM 11300 / CIP 105573 / AG-3a), this protein is Threonine--tRNA ligase.